Consider the following 273-residue polypeptide: Patr class II histocompatibility antigen, DO beta chain (273 aa).

The first 26 residues, 1-26, serve as a signal peptide directing secretion; the sequence is MGSGWVPWVVALLVNLTRLDSSMTQG. The interval 27–120 is beta-1; that stretch reads TDSPEDFVIQ…LGAPFTVGRK (94 aa). The Extracellular portion of the chain corresponds to 27–224; that stretch reads TDSPEDFVIQ…RAQSEYSWKK (198 aa). 2 cysteine pairs are disulfide-bonded: Cys-41-Cys-105 and Cys-143-Cys-199. Asn-45 carries N-linked (GlcNAc...) asparagine glycosylation. Residues 121–214 form a beta-2 region; it reads VQPEVTVYPE…SLLSPVSVEW (94 aa). An Ig-like C1-type domain is found at 123-213; sequence PEVTVYPERT…SSLLSPVSVE (91 aa). The tract at residues 215 to 224 is connecting peptide; that stretch reads RAQSEYSWKK. Residues 225–245 traverse the membrane as a helical segment; that stretch reads MLSGIAAFLLGLIFLLVGIVI. Over 246-273 the chain is Cytoplasmic; sequence QLRAQKGYVRTQMSGNEVSRAVLLPQSC.

The protein belongs to the MHC class II family. Heterodimer of an alpha chain (DOA) and a beta chain (DOB). Forms a heterotetrameric complex with an HLA-DM molecule during intracellular transport in endosomal/lysosomal compartments in B-cells.

Its subcellular location is the endosome membrane. It localises to the lysosome membrane. In terms of biological role, important modulator in the HLA class II restricted antigen presentation pathway by interaction with the HLA-DM molecule in B-cells. Modifies peptide exchange activity of HLA-DM. The sequence is that of Patr class II histocompatibility antigen, DO beta chain (Patr-DOB) from Pan troglodytes (Chimpanzee).